We begin with the raw amino-acid sequence, 85 residues long: Turripeptide PaIAa (85 aa).

The protein belongs to the turripeptide family. In terms of tissue distribution, expressed by the venom duct.

Its subcellular location is the secreted. In terms of biological role, is lethal to drosophila larvae. This chain is Turripeptide PaIAa, found in Polystira albida (White giant-turris).